Consider the following 318-residue polypeptide: Ribonuclease Z (318 aa).

7 residues coordinate Zn(2+): His62, His64, Asp66, His67, His140, Asp211, and His269. Residue Asp66 is the Proton acceptor of the active site.

This sequence belongs to the RNase Z family. Homodimer. Zn(2+) is required as a cofactor.

The catalysed reaction is Endonucleolytic cleavage of RNA, removing extra 3' nucleotides from tRNA precursor, generating 3' termini of tRNAs. A 3'-hydroxy group is left at the tRNA terminus and a 5'-phosphoryl group is left at the trailer molecule.. Its function is as follows. Zinc phosphodiesterase, which displays some tRNA 3'-processing endonuclease activity. Probably involved in tRNA maturation, by removing a 3'-trailer from precursor tRNA. The sequence is that of Ribonuclease Z from Brevibacillus brevis (strain 47 / JCM 6285 / NBRC 100599).